The sequence spans 361 residues: F-box protein pof7 (361 aa).

The region spanning 105-157 (NESVVPNILKLPDEVLLVILENCIRDLHDLRYLSSIALTCKHFAKALRADSLY) is the F-box domain.

As to quaternary structure, interacts with skp1.

The protein localises to the cytoplasm. This Schizosaccharomyces pombe (strain 972 / ATCC 24843) (Fission yeast) protein is F-box protein pof7 (pof7).